A 450-amino-acid chain; its full sequence is Bifunctional protein GlmU (450 aa).

The interval methionine 1 to arginine 217 is pyrophosphorylase. Residues leucine 6–glycine 9, lysine 20, glutamine 68, glycine 73–threonine 74, tyrosine 95–aspartate 97, glycine 134, glutamate 146, asparagine 161, and asparagine 215 each bind UDP-N-acetyl-alpha-D-glucosamine. Residue aspartate 97 coordinates Mg(2+). Asparagine 215 contacts Mg(2+). The tract at residues isoleucine 218 to glutamine 238 is linker. The segment at glycine 239–lysine 450 is N-acetyltransferase. UDP-N-acetyl-alpha-D-glucosamine is bound by residues arginine 320 and lysine 338. The active-site Proton acceptor is histidine 350. 2 residues coordinate UDP-N-acetyl-alpha-D-glucosamine: tyrosine 353 and asparagine 364. Residues alanine 367, asparagine 373 to tyrosine 374, serine 392, alanine 410, and arginine 427 each bind acetyl-CoA.

It in the N-terminal section; belongs to the N-acetylglucosamine-1-phosphate uridyltransferase family. This sequence in the C-terminal section; belongs to the transferase hexapeptide repeat family. Homotrimer. It depends on Mg(2+) as a cofactor.

It is found in the cytoplasm. The enzyme catalyses alpha-D-glucosamine 1-phosphate + acetyl-CoA = N-acetyl-alpha-D-glucosamine 1-phosphate + CoA + H(+). It carries out the reaction N-acetyl-alpha-D-glucosamine 1-phosphate + UTP + H(+) = UDP-N-acetyl-alpha-D-glucosamine + diphosphate. It functions in the pathway nucleotide-sugar biosynthesis; UDP-N-acetyl-alpha-D-glucosamine biosynthesis; N-acetyl-alpha-D-glucosamine 1-phosphate from alpha-D-glucosamine 6-phosphate (route II): step 2/2. It participates in nucleotide-sugar biosynthesis; UDP-N-acetyl-alpha-D-glucosamine biosynthesis; UDP-N-acetyl-alpha-D-glucosamine from N-acetyl-alpha-D-glucosamine 1-phosphate: step 1/1. The protein operates within bacterial outer membrane biogenesis; LPS lipid A biosynthesis. Catalyzes the last two sequential reactions in the de novo biosynthetic pathway for UDP-N-acetylglucosamine (UDP-GlcNAc). The C-terminal domain catalyzes the transfer of acetyl group from acetyl coenzyme A to glucosamine-1-phosphate (GlcN-1-P) to produce N-acetylglucosamine-1-phosphate (GlcNAc-1-P), which is converted into UDP-GlcNAc by the transfer of uridine 5-monophosphate (from uridine 5-triphosphate), a reaction catalyzed by the N-terminal domain. The protein is Bifunctional protein GlmU of Thermosipho melanesiensis (strain DSM 12029 / CIP 104789 / BI429).